A 918-amino-acid chain; its full sequence is DNA ligase 1 (918 aa).

A compositionally biased stretch (polar residues) spans 1–15 (MQRSIMSFFQPTTTE). The interval 1 to 271 (MQRSIMSFFQ…DPTNYNPSKS (271 aa)) is disordered. Residues 16-54 (GKAKKPEKEIPSSIREKEPPPKVALKERNRAVPESDSPV) are compositionally biased toward basic and acidic residues. Phosphoserine occurs at positions 50, 52, 66, and 67. Thr78 carries the phosphothreonine modification. The segment covering 81–92 (VQKPVSDSKQSS) has biased composition (low complexity). A compositionally biased stretch (polar residues) spans 100–114 (PENSPVFNCSPSMDI). The segment covering 120 to 130 (PKRRTARKQLP) has biased composition (basic residues). Lys145 is subject to N6-acetyllysine. Position 195 is a phosphothreonine (Thr195). Lys227 carries the post-translational modification N6-acetyllysine. Phosphoserine occurs at positions 230 and 231. Thr234 is modified (phosphothreonine). The segment covering 240–259 (VKTEVKQEESDTPRKEETKG) has biased composition (basic and acidic residues). ATP is bound at residue Glu566. Lys568 functions as the N6-AMP-lysine intermediate in the catalytic mechanism. ATP is bound by residues Arg573 and Glu621. Glu621 serves as a coordination point for Mg(2+). Positions 642–644 (KRK) are interaction with target DNA. Glu720 contributes to the Mg(2+) binding site. Residues Lys725 and Lys744 each coordinate ATP. Thr798 is modified (phosphothreonine). 4 positions are modified to phosphoserine: Ser801, Ser908, Ser909, and Ser913. Positions 881–918 (DKQPEQATTSDQVASLYRKQSQIQNQQSSDLDSDVEDY) are disordered. Over residues 885-910 (EQATTSDQVASLYRKQSQIQNQQSSD) the composition is skewed to polar residues.

It belongs to the ATP-dependent DNA ligase family. As to quaternary structure, interacts with PCNA. Interacts with POLB. Mg(2+) is required as a cofactor.

Its subcellular location is the nucleus. It catalyses the reaction ATP + (deoxyribonucleotide)n-3'-hydroxyl + 5'-phospho-(deoxyribonucleotide)m = (deoxyribonucleotide)n+m + AMP + diphosphate.. Functionally, DNA ligase that seals nicks in double-stranded during DNA repair. Also involved in DNA replication and DNA recombination. In Rattus norvegicus (Rat), this protein is DNA ligase 1 (Lig1).